A 96-amino-acid chain; its full sequence is Co-chaperonin GroES (96 aa).

It belongs to the GroES chaperonin family. As to quaternary structure, heptamer of 7 subunits arranged in a ring. Interacts with the chaperonin GroEL.

It is found in the cytoplasm. Together with the chaperonin GroEL, plays an essential role in assisting protein folding. The GroEL-GroES system forms a nano-cage that allows encapsulation of the non-native substrate proteins and provides a physical environment optimized to promote and accelerate protein folding. GroES binds to the apical surface of the GroEL ring, thereby capping the opening of the GroEL channel. This chain is Co-chaperonin GroES, found in Shewanella loihica (strain ATCC BAA-1088 / PV-4).